The following is a 394-amino-acid chain: Flap endonuclease 1-A (394 aa).

The tract at residues 1–105 (MGIKGLTGLL…GVLSKRLERR (105 aa)) is N-domain. Position 34 (aspartate 34) interacts with Mg(2+). The DNA site is built by arginine 47 and arginine 71. Mg(2+) is bound by residues aspartate 87, glutamate 159, glutamate 161, aspartate 180, and aspartate 182. The segment at 123–254 (DVDRFSRRTV…KSALKLIREY (132 aa)) is I-domain. Glutamate 159 is a binding site for DNA. 2 residues coordinate DNA: glycine 232 and aspartate 234. A Mg(2+)-binding site is contributed by aspartate 234. An interaction with PCNA region spans residues 341–349 (QQGRLDGFF). A disordered region spans residues 356–375 (KAAAPAPVGKAKGKGKVDAK).

This sequence belongs to the XPG/RAD2 endonuclease family. FEN1 subfamily. Interacts with PCNA. Three molecules of FEN1 bind to one PCNA trimer with each molecule binding to one PCNA monomer. PCNA stimulates the nuclease activity without altering cleavage specificity. Mg(2+) is required as a cofactor. Phosphorylated. Phosphorylation upon DNA damage induces relocalization to the nuclear plasma.

The protein resides in the nucleus. Its subcellular location is the nucleolus. The protein localises to the nucleoplasm. It localises to the mitochondrion. Functionally, structure-specific nuclease with 5'-flap endonuclease and 5'-3' exonuclease activities involved in DNA replication and repair. During DNA replication, cleaves the 5'-overhanging flap structure that is generated by displacement synthesis when DNA polymerase encounters the 5'-end of a downstream Okazaki fragment. It enters the flap from the 5'-end and then tracks to cleave the flap base, leaving a nick for ligation. Also involved in the long patch base excision repair (LP-BER) pathway, by cleaving within the apurinic/apyrimidinic (AP) site-terminated flap. Acts as a genome stabilization factor that prevents flaps from equilibrating into structures that lead to duplications and deletions. Also possesses 5'-3' exonuclease activity on nicked or gapped double-stranded DNA, and exhibits RNase H activity. Also involved in replication and repair of rDNA and in repairing mitochondrial DNA. In Laccaria bicolor (strain S238N-H82 / ATCC MYA-4686) (Bicoloured deceiver), this protein is Flap endonuclease 1-A.